Reading from the N-terminus, the 215-residue chain is Pyrrolidone-carboxylate peptidase (215 aa).

Residues E81, C144, and H168 contribute to the active site.

This sequence belongs to the peptidase C15 family. In terms of assembly, homotetramer.

It is found in the cytoplasm. The enzyme catalyses Release of an N-terminal pyroglutamyl group from a polypeptide, the second amino acid generally not being Pro.. Its function is as follows. Removes 5-oxoproline from various penultimate amino acid residues except L-proline. This is Pyrrolidone-carboxylate peptidase (pcp) from Bacillus subtilis (strain 168).